We begin with the raw amino-acid sequence, 664 residues long: MAGLSSSQIPDGEFTAVVYRLIRDSRYSEAVQLLSAELQGSPRSRAGLSLLAYCYYRLQEFELAAECYEQLSQMHPELEQYRLYQAQALYKACLYPEATRVAFLLDNPTYQTRVLRLQAAIKYSEGDLPGARSLVEQLLSGEGAEDSGGENDYDGQINLGCLLYKEGHYEAACSKFLAALQASGYQPDISYNLALAYYSSRQYAPALKHIADIIERGIRQHPELGVGMTTEGIDVRSVGNTIVLHQTALVEAFNLKAAIEYQLRNYEAAQEALTDMPPRAEEELDPVTLHNQALMNMDAKPTEGFEKLQFLLQQNPFPPETFGNLLLLYCKYEYFDLAADVLAENAHLTYKFLTPYLYDFLDAMITCQTAPEEAFIKLDGLAGMLTEQLRRLTIQVQDARHSRDDESAKKAVNDYDETLEKYIPVLMAQAKIYWNLENYPMVEKIFRKSVEFCNDHDVWKLNVAHVLFMQENKYKEAIGFYEPIVKKNYDNILSVSAIVLANLCVSYIMTSQNEEAEELMRKIEKEEEQLSYDDPDKKIYHLCIVNLVIGTLYCAKGNYDFGISRVIKSLEPYHKKLGTDTWYYAKRCFLSLLENMSKHTIMLRDSVIQECVQFLEHCELYGRSIPAIIEQPLEEERMHTGKNTVTYESRKLRALIYEIIGWNM.

7 TPR repeats span residues 11–44 (DGEF…SPRS), 45–78 (RAGL…HPEL), 153–186 (YDGQ…SGYQ), 188–220 (DISY…GIRQ), 385–418 (LTEQ…YDET), 423–456 (IPVL…CNDH), and 458–491 (VWKL…NYDN). Positions 507-534 (YIMTSQNEEAEELMRKIEKEEEQLSYDD) form a coiled coil. One copy of the TPR 8 repeat lies at 543–576 (CIVNLVIGTLYCAKGNYDFGISRVIKSLEPYHKK).

Belongs to the TTC30/dfy-1/fleer family. As to quaternary structure, interacts with the IFT B complex components IFT27, IFT46, IFT74, IFT52, IFT57, IFT80, IFT81 and IFT88. Interacts with KIF17.

Its subcellular location is the cell projection. It localises to the cilium. Its function is as follows. Required for polyglutamylation of axonemal tubulin. Plays a role in anterograde intraflagellar transport (IFT), the process by which cilia precursors are transported from the base of the cilium to the site of their incorporation at the tip. The sequence is that of Intraflagellar transport protein 70B (Ift70b) from Rattus norvegicus (Rat).